Here is a 194-residue protein sequence, read N- to C-terminus: Peptidyl-tRNA hydrolase (194 aa).

Residue Y21 coordinates tRNA. H26 functions as the Proton acceptor in the catalytic mechanism. Y72, N74, and N120 together coordinate tRNA.

It belongs to the PTH family. As to quaternary structure, monomer.

The protein localises to the cytoplasm. The enzyme catalyses an N-acyl-L-alpha-aminoacyl-tRNA + H2O = an N-acyl-L-amino acid + a tRNA + H(+). Hydrolyzes ribosome-free peptidyl-tRNAs (with 1 or more amino acids incorporated), which drop off the ribosome during protein synthesis, or as a result of ribosome stalling. Functionally, catalyzes the release of premature peptidyl moieties from peptidyl-tRNA molecules trapped in stalled 50S ribosomal subunits, and thus maintains levels of free tRNAs and 50S ribosomes. The protein is Peptidyl-tRNA hydrolase of Halorhodospira halophila (strain DSM 244 / SL1) (Ectothiorhodospira halophila (strain DSM 244 / SL1)).